Here is a 521-residue protein sequence, read N- to C-terminus: Bifunctional purine biosynthesis protein PurH (521 aa).

Residues 1–147 (MAKITRALIS…KNNADVTVVV (147 aa)) enclose the MGS-like domain.

Belongs to the PurH family.

It catalyses the reaction (6R)-10-formyltetrahydrofolate + 5-amino-1-(5-phospho-beta-D-ribosyl)imidazole-4-carboxamide = 5-formamido-1-(5-phospho-D-ribosyl)imidazole-4-carboxamide + (6S)-5,6,7,8-tetrahydrofolate. The enzyme catalyses IMP + H2O = 5-formamido-1-(5-phospho-D-ribosyl)imidazole-4-carboxamide. The protein operates within purine metabolism; IMP biosynthesis via de novo pathway; 5-formamido-1-(5-phospho-D-ribosyl)imidazole-4-carboxamide from 5-amino-1-(5-phospho-D-ribosyl)imidazole-4-carboxamide (10-formyl THF route): step 1/1. Its pathway is purine metabolism; IMP biosynthesis via de novo pathway; IMP from 5-formamido-1-(5-phospho-D-ribosyl)imidazole-4-carboxamide: step 1/1. The chain is Bifunctional purine biosynthesis protein PurH from Geotalea uraniireducens (strain Rf4) (Geobacter uraniireducens).